A 171-amino-acid polypeptide reads, in one-letter code: Small ribosomal subunit protein uS5 (171 aa).

Residues 14–77 (LKEKLVMVNR…EKAKKKLLKI (64 aa)) form the S5 DRBM domain.

The protein belongs to the universal ribosomal protein uS5 family. Part of the 30S ribosomal subunit. Contacts proteins S4 and S8.

Functionally, with S4 and S12 plays an important role in translational accuracy. Its function is as follows. Located at the back of the 30S subunit body where it stabilizes the conformation of the head with respect to the body. This Karelsulcia muelleri (strain GWSS) (Sulcia muelleri) protein is Small ribosomal subunit protein uS5.